The chain runs to 271 residues: MPEAPPLLLAAVLLGLVLLVVLLLLLRHWGWGLCLIGWNEFILQPIHNLLMGDTKEQRILNHVLQHAEPGNAQSVLEAIDTYCEQKEWAMNVGDKKGKIVDAVIQEHQPSVLLELGAYCGYSAVRMARLLSPGARLITIEINPDCAAITQRMVDFAGVKDKVTLVVGASQDIIPQLKKKYDVDTLDMVFLDHWKDRYLPDTLLLEECGLLRKGTVLLADNVICPGAPDFLAHVRGSSCFECTHYQSFLEYREVVDGLEKAIYKGPGSEAGP.

Residues 1-6 (MPEAPP) lie on the Cytoplasmic side of the membrane. The helical; Signal-anchor for type II membrane protein transmembrane segment at 7-26 (LLLAAVLLGLVLLVVLLLLL) threads the bilayer. The Extracellular segment spans residues 27 to 271 (RHWGWGLCLI…YKGPGSEAGP (245 aa)). S-adenosyl-L-methionine contacts are provided by residues valine 92, glutamate 114, serine 122, glutamate 140, isoleucine 141, 167–170 (GASQ), serine 169, and aspartate 191. Aspartate 191 provides a ligand contact to Mg(2+). Lysine 194 lines the substrate pocket. Positions 219 and 220 each coordinate Mg(2+). The substrate site is built by asparagine 220 and glutamate 249. Serine 267 carries the post-translational modification Phosphoserine.

This sequence belongs to the class I-like SAM-binding methyltransferase superfamily. Cation-dependent O-methyltransferase family. Requires Mg(2+) as cofactor. The N-terminus is blocked. In terms of tissue distribution, brain, liver, placenta, lymphocytes and erythrocytes.

It localises to the cytoplasm. Its subcellular location is the cell membrane. It catalyses the reaction a catechol + S-adenosyl-L-methionine = a guaiacol + S-adenosyl-L-homocysteine + H(+). The catalysed reaction is 2-hydroxyestrone + S-adenosyl-L-methionine = 2-hydroxy-3-methoxy-estrone + S-adenosyl-L-homocysteine + H(+). It carries out the reaction 4-hydroxyestrone + S-adenosyl-L-methionine = 4-methoxyestrone + S-adenosyl-L-homocysteine + H(+). The enzyme catalyses 2-hydroxyestrone + S-adenosyl-L-methionine = 2-methoxyestrone + S-adenosyl-L-homocysteine + H(+). It catalyses the reaction 4-hydroxy-17beta-estradiol + S-adenosyl-L-methionine = 4-methoxy-17beta-estradiol + S-adenosyl-L-homocysteine + H(+). The catalysed reaction is 2-hydroxy-17beta-estradiol + S-adenosyl-L-methionine = 2-hydroxy-3-methoxy-17beta-estradiol + S-adenosyl-L-homocysteine + H(+). It carries out the reaction 2-hydroxy-17beta-estradiol + S-adenosyl-L-methionine = 2-methoxy-17beta-estradiol + S-adenosyl-L-homocysteine + H(+). Its function is as follows. Catalyzes the O-methylation, and thereby the inactivation, of catecholamine neurotransmitters and catechol hormones. Also shortens the biological half-lives of certain neuroactive drugs, like L-DOPA, alpha-methyl DOPA and isoproterenol. In Homo sapiens (Human), this protein is Catechol O-methyltransferase.